The sequence spans 211 residues: Thiamine-phosphate synthase (211 aa).

Residues 37–41 and Asn69 each bind 4-amino-2-methyl-5-(diphosphooxymethyl)pyrimidine; that span reads QLRIK. 2 residues coordinate Mg(2+): Asp70 and Asp89. Ser108 lines the 4-amino-2-methyl-5-(diphosphooxymethyl)pyrimidine pocket. 134 to 136 is a binding site for 2-[(2R,5Z)-2-carboxy-4-methylthiazol-5(2H)-ylidene]ethyl phosphate; sequence TQT. Residue Lys137 participates in 4-amino-2-methyl-5-(diphosphooxymethyl)pyrimidine binding. 2-[(2R,5Z)-2-carboxy-4-methylthiazol-5(2H)-ylidene]ethyl phosphate is bound by residues Gly166 and 186-187; that span reads VS.

This sequence belongs to the thiamine-phosphate synthase family. Mg(2+) serves as cofactor.

The enzyme catalyses 2-[(2R,5Z)-2-carboxy-4-methylthiazol-5(2H)-ylidene]ethyl phosphate + 4-amino-2-methyl-5-(diphosphooxymethyl)pyrimidine + 2 H(+) = thiamine phosphate + CO2 + diphosphate. The catalysed reaction is 2-(2-carboxy-4-methylthiazol-5-yl)ethyl phosphate + 4-amino-2-methyl-5-(diphosphooxymethyl)pyrimidine + 2 H(+) = thiamine phosphate + CO2 + diphosphate. It carries out the reaction 4-methyl-5-(2-phosphooxyethyl)-thiazole + 4-amino-2-methyl-5-(diphosphooxymethyl)pyrimidine + H(+) = thiamine phosphate + diphosphate. The protein operates within cofactor biosynthesis; thiamine diphosphate biosynthesis; thiamine phosphate from 4-amino-2-methyl-5-diphosphomethylpyrimidine and 4-methyl-5-(2-phosphoethyl)-thiazole: step 1/1. Condenses 4-methyl-5-(beta-hydroxyethyl)thiazole monophosphate (THZ-P) and 2-methyl-4-amino-5-hydroxymethyl pyrimidine pyrophosphate (HMP-PP) to form thiamine monophosphate (TMP). This Klebsiella pneumoniae subsp. pneumoniae (strain ATCC 700721 / MGH 78578) protein is Thiamine-phosphate synthase.